The primary structure comprises 767 residues: Cilia- and flagella-associated protein 91 (767 aa).

The segment at 1–29 is disordered; it reads MSHAVTIQEPQAQPQVSQTRYRERSRAGS. The segment covering 8 to 19 has biased composition (polar residues); the sequence is QEPQAQPQVSQT.

It belongs to the CFAP91 family. As to quaternary structure, part of a complex containing MYCBP, AKAP1 and PRKAR2B. Interacts with MYCBP and AKAP1. Interacts with CFAP61. Post-translationally, phosphorylated by PKA.

It localises to the cytoplasm. The protein resides in the mitochondrion. It is found in the cytoskeleton. Its subcellular location is the cilium axoneme. Its function is as follows. Involved in sperm flagellum axonemal organization and function. May regulate cilium motility through its role in the assembly of the axonemal radial spokes. The chain is Cilia- and flagella-associated protein 91 (CFAP91) from Macaca fascicularis (Crab-eating macaque).